A 261-amino-acid chain; its full sequence is Lys-63-specific deubiquitinase BRCC36 (261 aa).

One can recognise an MPN domain in the interval 6 to 149 (VHIQGDAFLV…YTCFQSVQAQ (144 aa)). 3 residues coordinate Zn(2+): H92, H94, and D105. The JAMM motif motif lies at 92–105 (HSHPHITVWPSHVD).

This sequence belongs to the peptidase M67A family. BRCC36 subfamily. As to quaternary structure, component of the BRCA1-A complex, at least composed of brca1, bard1, uimc1/rap80, abraxas1, brcc3/brcc36, babam2 and babam1/nba1. In the BRCA1-A complex, interacts directly with ABRAXAS1 and babam2. Component of the BRISC complex, at least composed of ABRAXAS2, brcc3/brcc36, babam2 and babam1/nba1. Within the complex, interacts directly with abraxas2. Both the BRCA1-A complex and the BRISC complex bind polyubiquitin. Requires Zn(2+) as cofactor.

The protein resides in the nucleus. Its subcellular location is the cytoplasm. The protein localises to the cytoskeleton. It is found in the spindle pole. Its function is as follows. Metalloprotease that specifically cleaves 'Lys-63'-linked polyubiquitin chains. Does not have activity toward 'Lys-48'-linked polyubiquitin chains. Component of the BRCA1-A complex, a complex that specifically recognizes 'Lys-63'-linked ubiquitinated histones H2A and H2AX at DNA lesions sites, leading to target the brca1-bard1 heterodimer to sites of DNA damage at double-strand breaks (DSBs). In the BRCA1-A complex, it specifically removes 'Lys-63'-linked ubiquitin on histones H2A and H2AX, antagonizing the rnf8-dependent ubiquitination at double-strand breaks (DSBs). Catalytic subunit of the BRISC complex, a multiprotein complex that specifically cleaves 'Lys-63'-linked ubiquitin in various substrates. Mediates the specific 'Lys-63'-specific deubiquitination associated with the COP9 signalosome complex (CSN), via the interaction of the BRISC complex with the CSN complex. The BRISC complex is required for normal mitotic spindle assembly and microtubule attachment to kinetochores via its role in deubiquitinating numa1. Plays a role in interferon signaling via its role in the deubiquitination of the interferon receptor ifnar1; deubiquitination increases ifnar1 activity by enhancing its stability and cell surface expression. Acts as a regulator of the NLRP3 inflammasome by mediating deubiquitination of nlrp3. Down-regulates the response to bacterial lipopolysaccharide (LPS) via its role in ifnar1 deubiquitination. In Xenopus laevis (African clawed frog), this protein is Lys-63-specific deubiquitinase BRCC36 (brcc3).